The chain runs to 191 residues: Glucose-6-phosphate 1-dehydrogenase (191 aa).

N-acetylalanine is present on Ala-2. The residue at position 8 (Ser-8) is a Phosphoserine. Phosphothreonine is present on Thr-10. NADP(+)-binding positions include 38-45 (GASGDLAK) and Tyr-86. Residue Asp-101 coordinates D-glucose 6-phosphate. The active-site Proton acceptor is the His-106. Arg-163 is a binding site for NADP(+). Lys-173 carries the N6-acetyllysine modification. The NADP(+) site is built by Tyr-179 and Trp-185. A Phosphotyrosine modification is found at Tyr-179.

Belongs to the glucose-6-phosphate dehydrogenase family. In terms of assembly, homotetramer; dimer of dimers. Interacts with SIRT2; the interaction is enhanced by H(2)O(2) treatment. Forms a ternary complex with ALDOB and TP53; this interaction is direct. ALDOB stabilizes the complex inhibiting G6PD activity and keeping oxidative pentose phosphate metabolism in check. Post-translationally, acetylated by ELP3; acetylation inhibits its homodimerization and enzyme activity. Deacetylated by SIRT2; deacetylation stimulates its enzyme activity.

Its subcellular location is the cytoplasm. The protein localises to the cytosol. It is found in the membrane. It carries out the reaction D-glucose 6-phosphate + NADP(+) = 6-phospho-D-glucono-1,5-lactone + NADPH + H(+). Its pathway is carbohydrate degradation; pentose phosphate pathway; D-ribulose 5-phosphate from D-glucose 6-phosphate (oxidative stage): step 1/3. Functionally, cytosolic glucose-6-phosphate dehydrogenase that catalyzes the first and rate-limiting step of the oxidative branch within the pentose phosphate pathway/shunt, an alternative route to glycolysis for the dissimilation of carbohydrates and a major source of reducing power and metabolic intermediates for fatty acid and nucleic acid biosynthetic processes. The chain is Glucose-6-phosphate 1-dehydrogenase (G6PD) from Didelphis virginiana (North American opossum).